The chain runs to 327 residues: Zinc transport protein ZntB (327 aa).

The Cytoplasmic segment spans residues 1–273; sequence MEAIKGSDVN…ARRTYTMSLM (273 aa). Residues 274–294 form a helical membrane-spanning segment; that stretch reads AMVFLPSTFLTGLFGVNLGGI. Residues 295–300 lie on the Periplasmic side of the membrane; that stretch reads PGGGWQ. The helical transmembrane segment at 301 to 321 threads the bilayer; sequence FGFSIFCILLVVLIGGVALWL. At 322–327 the chain is on the cytoplasmic side; the sequence is HRSKWL.

This sequence belongs to the CorA metal ion transporter (MIT) (TC 1.A.35) family.

Its subcellular location is the cell inner membrane. It catalyses the reaction Zn(2+)(out) + H(+)(out) = Zn(2+)(in) + H(+)(in). Zinc transporter. Acts as a Zn(2+):proton symporter, which likely mediates zinc ion uptake. This Escherichia coli O8 (strain IAI1) protein is Zinc transport protein ZntB.